We begin with the raw amino-acid sequence, 312 residues long: DNA-directed RNA polymerase subunit alpha (312 aa).

Positions 1–229 (MLQYQIERID…ELFQPLATVT (229 aa)) are alpha N-terminal domain (alpha-NTD). Residues 240-312 (PSPEAQIPLE…ISIPQSRTSV (73 aa)) are alpha C-terminal domain (alpha-CTD).

It belongs to the RNA polymerase alpha chain family. As to quaternary structure, in cyanobacteria the RNAP catalytic core is composed of 2 alpha, 1 beta, 1 beta', 1 gamma and 1 omega subunit. When a sigma factor is associated with the core the holoenzyme is formed, which can initiate transcription.

The enzyme catalyses RNA(n) + a ribonucleoside 5'-triphosphate = RNA(n+1) + diphosphate. Its function is as follows. DNA-dependent RNA polymerase catalyzes the transcription of DNA into RNA using the four ribonucleoside triphosphates as substrates. This chain is DNA-directed RNA polymerase subunit alpha, found in Prochlorococcus marinus (strain MIT 9301).